A 253-amino-acid polypeptide reads, in one-letter code: uncharacterized protein (253 aa).

10–34 (LVTGASSGLGRGLALWLARRGVRVF) contacts NADP(+). S142 provides a ligand contact to substrate. Y155 acts as the Proton acceptor in catalysis.

Belongs to the short-chain dehydrogenases/reductases (SDR) family.

This is an uncharacterized protein from Myxococcus xanthus (strain DK1622).